The chain runs to 123 residues: MPPKTSGKAAKKAGKAQKNITKTDKKKKRRRKESYAIYIYKVLKQVHPDTGISSKAMSIMNSFVNDIFERIAAEASRLAHYNKRSTITSREIQTAVRLLLPGELAKHAVSEGTKAVTKYTSSK.

The tract at residues 1–30 (MPPKTSGKAAKKAGKAQKNITKTDKKKKRR) is disordered. Proline 2 is modified (N-methylproline; partial). Lysine 44 is subject to N6-succinyllysine. Serine 110 carries an O-linked (GlcNAc) serine glycan. N6-succinyllysine occurs at positions 114 and 118. Lysine 118 is covalently cross-linked (Glycyl lysine isopeptide (Lys-Gly) (interchain with G-Cter in ubiquitin)).

This sequence belongs to the histone H2B family. As to quaternary structure, the nucleosome is a histone octamer containing two molecules each of H2A, H2B, H3 and H4 assembled in one H3-H4 heterotetramer and two H2A-H2B heterodimers. The octamer wraps approximately 147 bp of DNA. In terms of processing, phosphorylated by the catalytic component of the Dbf4-dependent kinase (DDK) complex Cdc7. Post-translationally, monoubiquitination of Lys-118 by Bre1 gives a specific tag for epigenetic transcriptional activation and is also prerequisite for histone H3 'Lys-4' and 'Lys-79' methylation. Deubiquitination of Lys-118 by the SAGA complex is involved in activating transcription of a large subset of genes. Methylation at Pro-2 increases upon heat shock. In terms of processing, glcNAcylation at Ser-110 promotes monoubiquitination of Lys-118. It fluctuates in response to extracellular glucose, and associates with transcribed genes.

Its subcellular location is the nucleus. The protein resides in the chromosome. In terms of biological role, core component of nucleosome. Nucleosomes wrap and compact DNA into chromatin, limiting DNA accessibility to the cellular machineries which require DNA as a template. Histones thereby play a central role in transcription regulation, DNA repair, DNA replication and chromosomal stability. DNA accessibility is regulated via a complex set of post-translational modifications of histones, also called histone code, and nucleosome remodeling. This chain is Histone H2B (His2B), found in Drosophila yakuba (Fruit fly).